A 929-amino-acid chain; its full sequence is Leucine--tRNA ligase (929 aa).

Positions 42-52 match the 'HIGH' region motif; that stretch reads PYPSGNLHMGH. Residues 614–618 carry the 'KMSKS' region motif; it reads KMSKS. An ATP-binding site is contributed by Lys-617.

It belongs to the class-I aminoacyl-tRNA synthetase family.

It is found in the cytoplasm. The catalysed reaction is tRNA(Leu) + L-leucine + ATP = L-leucyl-tRNA(Leu) + AMP + diphosphate. In Trichodesmium erythraeum (strain IMS101), this protein is Leucine--tRNA ligase.